We begin with the raw amino-acid sequence, 126 residues long: Profilin (126 aa).

The protein belongs to the profilin family. In terms of assembly, occurs in many kinds of cells as a complex with monomeric actin in a 1:1 ratio. As to expression, expressed in ovary and head.

Its subcellular location is the cytoplasm. It is found in the cytoskeleton. Functionally, binds to actin and affects the structure of the cytoskeleton. At high concentrations, profilin prevents the polymerization of actin, whereas it enhances it at low concentrations. By binding to PIP2, it may inhibit the formation of IP3 and DG. This profilin is required for intercellular cytoplasm transport during Drosophila oogenesis. Function in neurons is essential for adult survival, and is important for climbing behavior and activity. The chain is Profilin (chic) from Drosophila melanogaster (Fruit fly).